Consider the following 109-residue polypeptide: Ubiquitin-related modifier 1 homolog (109 aa).

At G109 the chain carries 1-thioglycine. A Glycyl lysine isopeptide (Gly-Lys) (interchain with K-? in acceptor proteins) cross-link involves residue G109.

Belongs to the URM1 family. C-terminal thiocarboxylation occurs in 2 steps, it is first acyl-adenylated (-COAMP) via the hesA/moeB/thiF part of the MOCS3 homolog, then thiocarboxylated (-COSH) via the rhodanese domain of the MOCS3 homolog.

The protein resides in the cytoplasm. Its pathway is tRNA modification; 5-methoxycarbonylmethyl-2-thiouridine-tRNA biosynthesis. Its function is as follows. Acts as a sulfur carrier required for 2-thiolation of mcm(5)S(2)U at tRNA wobble positions of cytosolic tRNA(Lys), tRNA(Glu) and tRNA(Gln). Serves as sulfur donor in tRNA 2-thiolation reaction by being thiocarboxylated (-COSH) at its C-terminus by MOCS3. The sulfur is then transferred to tRNA to form 2-thiolation of mcm(5)S(2)U. Also acts as a ubiquitin-like protein (UBL) that is covalently conjugated via an isopeptide bond to lysine residues of target proteins. The thiocarboxylated form serves as substrate for conjugation and oxidative stress specifically induces the formation of UBL-protein conjugates. In Bombyx mori (Silk moth), this protein is Ubiquitin-related modifier 1 homolog.